Reading from the N-terminus, the 222-residue chain is Charged multivesicular body protein 3 (222 aa).

Gly2 is lipidated: N-myristoyl glycine. An intramolecular interaction with C-terminus region spans residues 2-113 (GLFGKTQEKP…LQKSTEVMKA (112 aa)). Residues 22-54 (KIRKEMRVVDRQIRDIQREEEKVKRSVKDAAKK) are a coiled coil. 2 important for autoinhibitory function regions span residues 59-64 (VCVVLA) and 168-169 (IL). Residues 149-222 (ESMDDQEEME…MQSRLATLRS (74 aa)) are a coiled coil. Residues 151-220 (MDDQEEMEEA…EAMQSRLATL (70 aa)) are intramolecular interaction with N-terminus. The tract at residues 151–222 (MDDQEEMEEA…MQSRLATLRS (72 aa)) is interaction with VPS4A. Lys179 is covalently cross-linked (Glycyl lysine isopeptide (Lys-Gly) (interchain with G-Cter in ubiquitin)). The disordered stretch occupies residues 180 to 222 (APSKVTDALPEPEPLGAMAASEDEEEEEEALEAMQSRLATLRS). Interaction with STAMBP regions lie at residues 196 to 222 (AMAA…TLRS), 203 to 207 (EEEEE), and 221 to 222 (RS). Ser200 carries the phosphoserine modification. Over residues 200-210 (SEDEEEEEEAL) the composition is skewed to acidic residues. The MIT-interacting motif motif lies at 201 to 211 (EDEEEEEEALE).

It belongs to the SNF7 family. In terms of assembly, probable core component of the endosomal sorting required for transport complex III (ESCRT-III). ESCRT-III components are thought to multimerize to form a flat lattice on the perimeter membrane of the endosome. Several assembly forms of ESCRT-III may exist that interact and act sequentially. Forms a metastable monomer in solution; its core structure (without part of the putative autoinhibitory C-terminal acidic region) oligomerizes into a flat lattice via two different dimerization interfaces. In vitro, heteromerizes with CHMP2A (but not CHMP4) to form helical tubular structures that expose membrane-interacting sites on the outside whereas VPS4B can associate on the inside of the tubule. May interact with IGFBP7; the relevance of such interaction however remains unclear. Interacts with CHMP2A. Interacts with CHMP4A; the interaction requires the release of CHMP4A autoinhibition. Interacts with VPS4A. Interacts with STAMBP; the interaction appears to relieve the autoinhibition of CHMP3. Interacts with VTA1.

It localises to the cytoplasm. Its subcellular location is the cytosol. The protein localises to the membrane. It is found in the endosome. The protein resides in the late endosome membrane. Probable core component of the endosomal sorting required for transport complex III (ESCRT-III) which is involved in multivesicular bodies (MVBs) formation and sorting of endosomal cargo proteins into MVBs. MVBs contain intraluminal vesicles (ILVs) that are generated by invagination and scission from the limiting membrane of the endosome and mostly are delivered to lysosomes enabling degradation of membrane proteins, such as stimulated growth factor receptors, lysosomal enzymes and lipids. The MVB pathway appears to require the sequential function of ESCRT-O, -I,-II and -III complexes. ESCRT-III proteins mostly dissociate from the invaginating membrane before the ILV is released. The ESCRT machinery also functions in topologically equivalent membrane fission events, such as the terminal stages of cytokinesis and the budding of enveloped viruses (lentiviruses). ESCRT-III proteins are believed to mediate the necessary vesicle extrusion and/or membrane fission activities, possibly in conjunction with the AAA ATPase VPS4. Selectively binds to phosphatidylinositol 3,5-bisphosphate PtdIns(3,5)P2 and PtdIns(3,4)P2 in preference to other phosphoinositides tested. Involved in late stages of cytokinesis. Plays a role in endosomal sorting/trafficking of EGF receptor. The protein is Charged multivesicular body protein 3 (CHMP3) of Bos taurus (Bovine).